A 69-amino-acid polypeptide reads, in one-letter code: Guanine nucleotide-binding protein G(I)/G(S)/G(O) subunit gamma-T2 (69 aa).

At Cys66 the chain carries Cysteine methyl ester. Cys66 is lipidated: S-farnesyl cysteine. Positions 67 to 69 (VLS) are cleaved as a propeptide — removed in mature form.

The protein belongs to the G protein gamma family. In terms of assembly, g proteins are composed of 3 units, alpha, beta and gamma.

Its subcellular location is the cell membrane. Guanine nucleotide-binding proteins (G proteins) are involved as a modulator or transducer in various transmembrane signaling systems. The beta and gamma chains are required for the GTPase activity, for replacement of GDP by GTP, and for G protein-effector interaction. The sequence is that of Guanine nucleotide-binding protein G(I)/G(S)/G(O) subunit gamma-T2 (Gngt2) from Mus musculus (Mouse).